The sequence spans 752 residues: Catalase-peroxidase 1 (752 aa).

Positions 1–45 are disordered; that stretch reads MPPNTPDASDARPPQADTETHSHSESENPVIESPKPKAHAPLTNQ. The segment at residues 116-244 is a cross-link (tryptophyl-tyrosyl-methioninium (Trp-Tyr) (with M-270)); it reads WHAAGTYRIF…YGATTMGLIY (129 aa). The active-site Proton acceptor is the His117. The segment at residues 244 to 270 is a cross-link (tryptophyl-tyrosyl-methioninium (Tyr-Met) (with W-116)); the sequence is YVNPEGPEGKPDPLAAAHDIRETFGRM. His285 contacts heme b.

The protein belongs to the peroxidase family. Peroxidase/catalase subfamily. In terms of assembly, homodimer or homotetramer. Requires heme b as cofactor. Post-translationally, formation of the three residue Trp-Tyr-Met cross-link is important for the catalase, but not the peroxidase activity of the enzyme.

The catalysed reaction is H2O2 + AH2 = A + 2 H2O. The enzyme catalyses 2 H2O2 = O2 + 2 H2O. Its function is as follows. Bifunctional enzyme with both catalase and broad-spectrum peroxidase activity. May play a role in the intracellular survival of mycobacteria. The polypeptide is Catalase-peroxidase 1 (Mycolicibacterium fortuitum (Mycobacterium fortuitum)).